The chain runs to 98 residues: NADH-ubiquinone oxidoreductase chain 4L (98 aa).

3 consecutive transmembrane segments (helical) span residues 1-21 (MSMVYANIFLAFIMSLMGLLM), 29-49 (SLLCLEGMMLSLFVMMTVTIL), and 61-81 (IILLVFAACEAALGLLLLVMV).

The protein belongs to the complex I subunit 4L family. As to quaternary structure, core subunit of respiratory chain NADH dehydrogenase (Complex I) which is composed of 45 different subunits.

Its subcellular location is the mitochondrion inner membrane. It catalyses the reaction a ubiquinone + NADH + 5 H(+)(in) = a ubiquinol + NAD(+) + 4 H(+)(out). Core subunit of the mitochondrial membrane respiratory chain NADH dehydrogenase (Complex I) which catalyzes electron transfer from NADH through the respiratory chain, using ubiquinone as an electron acceptor. Part of the enzyme membrane arm which is embedded in the lipid bilayer and involved in proton translocation. The protein is NADH-ubiquinone oxidoreductase chain 4L (MT-ND4L) of Pusa hispida (Ringed seal).